The chain runs to 817 residues: Protein hunchback (817 aa).

Disordered regions lie at residues 51–77 (PGTI…HSPL), 93–132 (HNGG…TSSA), and 187–252 (YSQQ…EDQD). The segment covering 62 to 76 (QQHSSMMASQPQHSP) has biased composition (low complexity). Positions 103-119 (FSDNSGAMTPSPNTNVG) are enriched in polar residues. Positions 189–201 (QQQQQQQQRQLQQ) are enriched in low complexity. C2H2-type zinc fingers lie at residues 287 to 309 (HKCK…ARTH), 316 to 338 (LQCP…IRKH), 344 to 366 (FQCD…RKSH), and 372 to 396 (YRCA…KYEH). Disordered stretches follow at residues 456 to 477 (PLQQ…SSVA), 491 to 513 (QNLA…SSQQ), 564 to 619 (QLQQ…QQTP), and 666 to 758 (APTS…AGNS). Residues 564-576 (QLQQQQQNKQANE) show a composition bias toward low complexity. Acidic residues predominate over residues 577–595 (NGEEDEEDNDEVDEDEEEF). Residues 680–694 (MPPTTSSPIHPSQVN) are compositionally biased toward polar residues. Residues 721–758 (PTTANTSASSTASSSGNSSNSSSTSTSSNSNSSSAGNS) show a composition bias toward low complexity. 2 consecutive C2H2-type zinc fingers follow at residues 764–786 (YECK…MGYH) and 792–816 (FKCN…RNAH).

It belongs to the hunchback C2H2-type zinc-finger protein family.

The protein localises to the nucleus. Gap class segmentation protein that controls development of head structures. In Musca domestica (House fly), this protein is Protein hunchback (hb).